Here is a 242-residue protein sequence, read N- to C-terminus: Lactate utilization protein A 2 (242 aa).

Belongs to the LutA/YkgE family.

Functionally, is involved in L-lactate degradation and allows cells to grow with lactate as the sole carbon source. This chain is Lactate utilization protein A 2, found in Bacillus cereus (strain Q1).